We begin with the raw amino-acid sequence, 363 residues long: MERVYNFSAGPAVLPVPVLEKVQRELLSYNGSGMSVMELSHRSELFQNIIDDAESLIRELMGIPENYKVLFLQGGASLQFDMVPMNLANGKKAVYVNTGSWAKKAISEAKKIQGVEVEVIASSEDRNFSYIPEIPTVSTDAAYLHVTTNNTIEGTAMFDVPDSAVPVVADMSSNILSSVYDVKKFGLIYAGAQKNIGPAGLTLVIVREDLIGQVEGLPSMLDFKVQAENGSMYNTPPTFAVYVAKLVFEWIKEQGGVAGIEALNRKKAALLYDYIEQSDFFSSPVEPSARSLTNIPFVTNSAEFDKAFVKEAEANGFKNLKGHRSVGGMRASLYNAFPIEGVEALIAFMEKFANARKGGEVRV.

Position 42 (Arg42) interacts with L-glutamate. Pyridoxal 5'-phosphate is bound by residues 76–77 (AS), Trp101, Thr151, Asp170, and Gln193. At Lys194 the chain carries N6-(pyridoxal phosphate)lysine. Pyridoxal 5'-phosphate is bound at residue 234–235 (NT).

The protein belongs to the class-V pyridoxal-phosphate-dependent aminotransferase family. SerC subfamily. Homodimer. Pyridoxal 5'-phosphate serves as cofactor.

Its subcellular location is the cytoplasm. It carries out the reaction O-phospho-L-serine + 2-oxoglutarate = 3-phosphooxypyruvate + L-glutamate. The catalysed reaction is 4-(phosphooxy)-L-threonine + 2-oxoglutarate = (R)-3-hydroxy-2-oxo-4-phosphooxybutanoate + L-glutamate. It participates in amino-acid biosynthesis; L-serine biosynthesis; L-serine from 3-phospho-D-glycerate: step 2/3. Its function is as follows. Catalyzes the reversible conversion of 3-phosphohydroxypyruvate to phosphoserine and of 3-hydroxy-2-oxo-4-phosphonooxybutanoate to phosphohydroxythreonine. The sequence is that of Phosphoserine aminotransferase from Listeria innocua serovar 6a (strain ATCC BAA-680 / CLIP 11262).